The chain runs to 457 residues: Siroheme synthase (457 aa).

Residues 1–204 (MDHLPIFCQL…NDQKAITETT (204 aa)) form a precorrin-2 dehydrogenase /sirohydrochlorin ferrochelatase region. NAD(+)-binding positions include 22-23 (DV) and 43-44 (LA). Phosphoserine is present on Ser-128. The uroporphyrinogen-III C-methyltransferase stretch occupies residues 216 to 457 (GEVVLVGAGP…RDKLNWFSNH (242 aa)). Pro-225 serves as a coordination point for S-adenosyl-L-methionine. The Proton acceptor role is filled by Asp-248. The active-site Proton donor is Lys-270. Residues 301 to 303 (GGD), Ile-306, 331 to 332 (TA), Met-382, and Gly-411 each bind S-adenosyl-L-methionine.

It in the N-terminal section; belongs to the precorrin-2 dehydrogenase / sirohydrochlorin ferrochelatase family. This sequence in the C-terminal section; belongs to the precorrin methyltransferase family.

The catalysed reaction is uroporphyrinogen III + 2 S-adenosyl-L-methionine = precorrin-2 + 2 S-adenosyl-L-homocysteine + H(+). It carries out the reaction precorrin-2 + NAD(+) = sirohydrochlorin + NADH + 2 H(+). The enzyme catalyses siroheme + 2 H(+) = sirohydrochlorin + Fe(2+). Its pathway is cofactor biosynthesis; adenosylcobalamin biosynthesis; precorrin-2 from uroporphyrinogen III: step 1/1. The protein operates within cofactor biosynthesis; adenosylcobalamin biosynthesis; sirohydrochlorin from precorrin-2: step 1/1. It participates in porphyrin-containing compound metabolism; siroheme biosynthesis; precorrin-2 from uroporphyrinogen III: step 1/1. It functions in the pathway porphyrin-containing compound metabolism; siroheme biosynthesis; siroheme from sirohydrochlorin: step 1/1. Its pathway is porphyrin-containing compound metabolism; siroheme biosynthesis; sirohydrochlorin from precorrin-2: step 1/1. Its function is as follows. Multifunctional enzyme that catalyzes the SAM-dependent methylations of uroporphyrinogen III at position C-2 and C-7 to form precorrin-2 via precorrin-1. Then it catalyzes the NAD-dependent ring dehydrogenation of precorrin-2 to yield sirohydrochlorin. Finally, it catalyzes the ferrochelation of sirohydrochlorin to yield siroheme. This is Siroheme synthase from Escherichia coli O7:K1 (strain IAI39 / ExPEC).